Consider the following 956-residue polypeptide: Transient receptor potential channel pyrexia (956 aa).

The Cytoplasmic portion of the chain corresponds to 1–491; the sequence is MENVRFSIIE…LFLKWRRIRK (491 aa). ANK repeat units lie at residues 132 to 161, 166 to 195, 198 to 227, 231 to 260, 265 to 294, 298 to 327, 331 to 362, and 366 to 395; these read RGRT…DPNR, KEVT…SINI, EKRS…DPNT, YTET…DVRS, GKVT…EVDC, SHQT…NVNA, DGRT…DVNK, and YGYT…DITA. A helical membrane pass occupies residues 492 to 512; sequence FFLMSLAYHTLFVILFTFYVI. The Extracellular segment spans residues 513 to 525; the sequence is WVYVRCCKKEELC. The helical transmembrane segment at 526 to 546 threads the bilayer; that stretch reads VAPGYVSTIGYLVIILNLILL. The Cytoplasmic portion of the chain corresponds to 547 to 565; sequence GKEVFQMAHGLRGYAKYWE. The helical transmembrane segment at 566–584 threads the bilayer; sequence NWLQWTIGTGVLLCVTPET. Over 585–601 the chain is Extracellular; the sequence is VRTDDLTAVPVWQHHVA. The helical transmembrane segment at 602 to 622 threads the bilayer; sequence AIVILLVWLELMMLVGRFPIF. At 623–638 the chain is on the cytoplasmic side; that stretch reads GVYVQMFTKVAVNFAK. Residues 639–659 traverse the membrane as a helical segment; that stretch reads FLLAYICLLVAFGLSFAVLFN. The Extracellular portion of the chain corresponds to 660-701; sequence DYPAFENITWSFLKSITMMSGELEFEDIFYGDYAVKFPVTAH. Residue Asn666 is glycosylated (N-linked (GlcNAc...) asparagine). A helical membrane pass occupies residues 702-722; that stretch reads IIFLSFVLLVTVILTNLMVGL. Residues 723 to 956 lie on the Cytoplasmic side of the membrane; the sequence is AVSDIQGLQV…VASSHIRRHR (234 aa).

The protein belongs to the transient receptor (TC 1.A.4) family. STrpC subfamily. As to quaternary structure, homooligomer; between isoform A and isoform B. As to expression, expressed in various peripheral nerves and the central nerves in embryos. In adults, it is expressed in sensory neurons lying beneath the bristles around eyes, neurons innervating the bristles on the back of thorax and neurons in maxillary palps, proboscis and antennae. Expressed in multidendritic neurons, which mediate temperature sensing, as well as non-multidendritic neurons in larval epidermis. Localizes ubiquitously throughout neurites.

The protein localises to the membrane. Functionally, receptor-activated non-selective cation channel involved in protection or tolerance from high temperature stress. Activated by temperatures above 40 degrees Celsius. More permeable to K(+) than to Na(+). May act in stress protection allow flies to survive in natural environments. This chain is Transient receptor potential channel pyrexia (pyx), found in Drosophila melanogaster (Fruit fly).